Consider the following 166-residue polypeptide: NAD(P)H-quinone oxidoreductase subunit I, chloroplastic (166 aa).

2 4Fe-4S ferredoxin-type domains span residues 55–84 and 95–124; these read GRIH…VDWK and LNYS…MTEE. Cys64, Cys67, Cys70, Cys74, Cys104, Cys107, Cys110, and Cys114 together coordinate [4Fe-4S] cluster.

The protein belongs to the complex I 23 kDa subunit family. NDH is composed of at least 16 different subunits, 5 of which are encoded in the nucleus. [4Fe-4S] cluster serves as cofactor.

Its subcellular location is the plastid. The protein resides in the chloroplast thylakoid membrane. It carries out the reaction a plastoquinone + NADH + (n+1) H(+)(in) = a plastoquinol + NAD(+) + n H(+)(out). It catalyses the reaction a plastoquinone + NADPH + (n+1) H(+)(in) = a plastoquinol + NADP(+) + n H(+)(out). Its function is as follows. NDH shuttles electrons from NAD(P)H:plastoquinone, via FMN and iron-sulfur (Fe-S) centers, to quinones in the photosynthetic chain and possibly in a chloroplast respiratory chain. The immediate electron acceptor for the enzyme in this species is believed to be plastoquinone. Couples the redox reaction to proton translocation, and thus conserves the redox energy in a proton gradient. The sequence is that of NAD(P)H-quinone oxidoreductase subunit I, chloroplastic from Marshallia caespitosa (Barbara's buttons).